The chain runs to 622 residues: Deoxynucleoside triphosphate triphosphohydrolase SAMHD1 (622 aa).

In terms of domain architecture, SAM spans 26 to 89 (WDVEDTVAYL…LHCLQKLSQI (64 aa)). GTP is bound by residues lysine 95 and valine 96. Residue asparagine 98 coordinates dGTP. Residues aspartate 116, glutamine 121, and arginine 124 each coordinate GTP. 4 residues coordinate dGTP: glutamine 128, leucine 129, valine 135, and arginine 143. Glutamine 128 is a dATP binding site. Glutamine 128 provides a ligand contact to dCTP. Glutamine 128 serves as a coordination point for dTTP. Residue arginine 143 participates in dATP binding. Residue arginine 143 participates in dCTP binding. Residue arginine 143 participates in dTTP binding. The HD domain occupies 143–296 (RFEHSIGVGY…GIDVDKWDYF (154 aa)). Mn(2+) is bound by residues histidine 146, histidine 185, and aspartate 186. The dATP site is built by histidine 189 and histidine 194. DCTP contacts are provided by histidine 189 and histidine 194. The dTTP site is built by histidine 189 and histidine 194. The active site involves histidine 212. Aspartate 291 contributes to the Mn(2+) binding site. Lysine 292, tyrosine 295, aspartate 299, arginine 313, arginine 332, lysine 334, asparagine 338, arginine 346, tyrosine 354, glutamine 355, histidine 356, and lysine 357 together coordinate dGTP. Positions 292, 295, and 299 each coordinate dATP. DCTP is bound by residues lysine 292, tyrosine 295, and aspartate 299. DTTP contacts are provided by lysine 292, tyrosine 295, and aspartate 299. Residue arginine 346 coordinates dATP. Residue arginine 346 participates in dCTP binding. Glutamine 355 provides a ligand contact to dATP. Glutamine 355 contributes to the dCTP binding site. Glutamine 355 contributes to the dTTP binding site. Residues arginine 431, lysine 435, and lysine 502 each contribute to the GTP site. Lysine 502 serves as a coordination point for dGTP. A disordered region spans residues 571–622 (TPLKQDWHAREDEDEEEEEKHRQNQTLPHHTPQRTGRNVKVDLFQARGETKL). A compositionally biased stretch (polar residues) spans 594–606 (NQTLPHHTPQRTG).

It belongs to the SAMHD1 family. In terms of assembly, homodimer; in absence of GTP and dNTP. Homotetramer; in GTP- and dNTP-bound form. Interacts with rbbp8/CtIP. Zn(2+) serves as cofactor.

It is found in the nucleus. Its subcellular location is the chromosome. The catalysed reaction is a 2'-deoxyribonucleoside 5'-triphosphate + H2O = a 2'-deoxyribonucleoside + triphosphate + H(+). The enzyme catalyses dATP + H2O = 2'-deoxyadenosine + triphosphate + H(+). It carries out the reaction dCTP + H2O = 2'-deoxycytidine + triphosphate + H(+). It catalyses the reaction dGTP + H2O = 2'-deoxyguanosine + triphosphate + H(+). The catalysed reaction is dTTP + H2O = thymidine + triphosphate + H(+). Its activity is regulated as follows. Allosterically activated and regulated via the combined actions of GTP and dNTPs (dATP, dGTP, dTTP and dCTP): Allosteric site 1 binds GTP, while allosteric site 2 binds dNTP. Allosteric activation promotes the formation of highly active homotetramers. Protein that acts both as a host restriction factor involved in defense response to virus and as a regulator of DNA end resection at stalled replication forks. Has deoxynucleoside triphosphate (dNTPase) activity, which is required to restrict infection by viruses: dNTPase activity reduces cellular dNTP levels to levels too low for retroviral reverse transcription to occur, blocking early-stage virus replication in dendritic and other myeloid cells. Functions during S phase at stalled DNA replication forks to promote the resection of gapped or reversed forks: acts by stimulating the exonuclease activity of MRE11, activating the ATR-CHK1 pathway and allowing the forks to restart replication. Its ability to promote degradation of nascent DNA at stalled replication forks is required to prevent induction of type I interferons, thereby preventing chronic inflammation. Ability to promote DNA end resection at stalled replication forks is independent of dNTPase activity. This chain is Deoxynucleoside triphosphate triphosphohydrolase SAMHD1, found in Danio rerio (Zebrafish).